The primary structure comprises 62 residues: 6.7 kDa chloroplast outer envelope membrane protein (62 aa).

At M1–Q17 the chain is on the chloroplast intermembrane side. Residues A18–F40 traverse the membrane as a helical segment. Topologically, residues N41–T62 are cytoplasmic.

Its subcellular location is the plastid. The protein localises to the chloroplast outer membrane. The sequence is that of 6.7 kDa chloroplast outer envelope membrane protein from Spinacia oleracea (Spinach).